We begin with the raw amino-acid sequence, 207 residues long: Glycerol-3-phosphate acyltransferase (207 aa).

Helical transmembrane passes span 3-23, 54-74, 81-101, 122-142, and 158-178; these read LIGL…VWVG, TIVM…PIVF, GTAT…VSIF, PIMF…TSIV, and LVFQ…FVFY.

This sequence belongs to the PlsY family. As to quaternary structure, probably interacts with PlsX.

It is found in the cell membrane. The enzyme catalyses an acyl phosphate + sn-glycerol 3-phosphate = a 1-acyl-sn-glycero-3-phosphate + phosphate. It functions in the pathway lipid metabolism; phospholipid metabolism. Functionally, catalyzes the transfer of an acyl group from acyl-phosphate (acyl-PO(4)) to glycerol-3-phosphate (G3P) to form lysophosphatidic acid (LPA). This enzyme utilizes acyl-phosphate as fatty acyl donor, but not acyl-CoA or acyl-ACP. The chain is Glycerol-3-phosphate acyltransferase from Levilactobacillus brevis (strain ATCC 367 / BCRC 12310 / CIP 105137 / JCM 1170 / LMG 11437 / NCIMB 947 / NCTC 947) (Lactobacillus brevis).